Reading from the N-terminus, the 596-residue chain is Elongation factor 4 (596 aa).

The tr-type G domain maps to 2 to 184; that stretch reads KHIRNFSIIA…VIVEQIPPPE (183 aa). GTP-binding positions include 14 to 19 and 131 to 134; these read DHGKST and NKID.

Belongs to the TRAFAC class translation factor GTPase superfamily. Classic translation factor GTPase family. LepA subfamily.

It localises to the cell inner membrane. The enzyme catalyses GTP + H2O = GDP + phosphate + H(+). Its function is as follows. Required for accurate and efficient protein synthesis under certain stress conditions. May act as a fidelity factor of the translation reaction, by catalyzing a one-codon backward translocation of tRNAs on improperly translocated ribosomes. Back-translocation proceeds from a post-translocation (POST) complex to a pre-translocation (PRE) complex, thus giving elongation factor G a second chance to translocate the tRNAs correctly. Binds to ribosomes in a GTP-dependent manner. This Shewanella oneidensis (strain ATCC 700550 / JCM 31522 / CIP 106686 / LMG 19005 / NCIMB 14063 / MR-1) protein is Elongation factor 4.